Here is a 520-residue protein sequence, read N- to C-terminus: Laccase-4 (520 aa).

An N-terminal signal peptide occupies residues 1-18; that stretch reads MGRFSSLCALTAVIHSFG. Plastocyanin-like domains follow at residues 24 to 149, 161 to 303, and 370 to 491; these read IGPV…MVVY, VDDE…ILRY, and TVPV…FSED. N-linked (GlcNAc...) asparagine glycosylation is found at Asn73 and Asn76. His86, His88, His131, and His133 together coordinate Cu cation. 2 cysteine pairs are disulfide-bonded: Cys107-Cys509 and Cys139-Cys227. Residues Asn239 and Asn399 are each glycosylated (N-linked (GlcNAc...) asparagine). Residues His418, His421, His423, His473, Cys474, His475, and His479 each coordinate Cu cation. The N-linked (GlcNAc...) asparagine glycan is linked to Asn497.

It belongs to the multicopper oxidase family. In terms of assembly, homodimer. Cu cation serves as cofactor.

Its subcellular location is the secreted. It carries out the reaction 4 hydroquinone + O2 = 4 benzosemiquinone + 2 H2O. In terms of biological role, lignin degradation and detoxification of lignin-derived products. The chain is Laccase-4 (LCC4) from Trametes villosa (White-rot fungus).